We begin with the raw amino-acid sequence, 192 residues long: MEATRRSRLSLSRRRPPLGVRPRSNTAGSLPDGGECAKLWTELLRTASADLNVDGELPPLPAFPDQEPRRSPERPPPETFTVGTETFFWTPFPAPSPGRGGNSGGSDLVLSAVRGRTGSPQQYAAPELRGTPSAEEQPSEEQPSQRQSSVDGAMTLQSCPMCQVDFAPGLAQLDIDGHLAQCLADSTDDIEW.

The segment covering 1-16 (MEATRRSRLSLSRRRP) has biased composition (basic residues). 2 disordered regions span residues 1 to 34 (MEAT…PDGG) and 51 to 151 (LNVD…SSVD). Residues 66–76 (QEPRRSPERPP) show a composition bias toward basic and acidic residues. 2 positions are modified to phosphoserine: Ser119 and Ser149. Residues 132–149 (PSAEEQPSEEQPSQRQSS) are compositionally biased toward low complexity. A UBZ2-type zinc finger spans residues 156–192 (LQSCPMCQVDFAPGLAQLDIDGHLAQCLADSTDDIEW). The Zn(2+) site is built by Cys159, Cys162, His178, and Cys182.

In terms of assembly, component of the Fanconi anemia (FA) complex. Interacts with FANCA; interaction is direct. Interacts with REV1.

It localises to the nucleus. The protein localises to the chromosome. Its function is as follows. Component of the Fanconi anemia (FA) complex required to recruit the FA complex to DNA interstrand cross-links (ICLs) and promote ICLs repair. Following DNA damage recognizes and binds 'Lys-63'-linked ubiquitin generated by RNF8 at ICLs and recruits other components of the FA complex. Promotes translesion synthesis via interaction with REV1. The protein is Fanconi anemia core complex-associated protein 20 of Bos taurus (Bovine).